We begin with the raw amino-acid sequence, 56 residues long: Small ribosomal subunit protein uS14 (56 aa).

Zn(2+)-binding residues include C21, C24, C39, and C42.

The protein belongs to the universal ribosomal protein uS14 family. Zinc-binding uS14 subfamily. Part of the 30S ribosomal subunit. Zn(2+) is required as a cofactor.

In terms of biological role, binds 16S rRNA, required for the assembly of 30S particles. This Thermococcus kodakarensis (strain ATCC BAA-918 / JCM 12380 / KOD1) (Pyrococcus kodakaraensis (strain KOD1)) protein is Small ribosomal subunit protein uS14.